Reading from the N-terminus, the 571-residue chain is Cytoplasmic polyadenylation element-binding protein 2 (571 aa).

2 disordered regions span residues 1-23 (MSKS…NGDR) and 51-75 (FKQN…VSQE). Positions 61–75 (SESRHENEENKVSQE) are enriched in basic and acidic residues. An RRM domain is found at 435 to 517 (LVAFIGGVPR…KRVEIKPYFF (83 aa)).

Cytoplasmic polyadenylation element binding protein that binds to and regulates the translation of specific mRNAs. In Caenorhabditis remanei (Caenorhabditis vulgaris), this protein is Cytoplasmic polyadenylation element-binding protein 2 (cpb-2).